The following is a 312-amino-acid chain: Transcriptional regulator protein Pur-beta (312 aa).

A disordered region spans residues 1–32; sequence MADGDSGSERGGGGGPCGFQPASRGGGEQETQ. Ala2 is subject to N-acetylalanine. Phosphoserine occurs at positions 6 and 8. Arg24 is modified (omega-N-methylarginine). The tract at residues 28–254 is DNA-binding; sequence EQETQELASK…LRVSEVKPSY (227 aa). Thr31 carries the post-translational modification Phosphothreonine. Ser101 is modified (phosphoserine). Omega-N-methylarginine is present on Arg152. An N6-acetyllysine modification is found at Lys267. The segment covering 284–295 has biased composition (basic and acidic residues); that stretch reads ERQRDKLYERRG. The tract at residues 284–312 is disordered; sequence ERQRDKLYERRGGGSGGGEESEGEEVDED. Omega-N-methylarginine is present on Arg294. 2 positions are modified to phosphoserine: Ser298 and Ser304. Residues 302-312 show a composition bias toward acidic residues; the sequence is EESEGEEVDED.

The protein belongs to the PUR DNA-binding protein family. As to quaternary structure, homodimer, heterodimer with PURA and heterotrimer with PURA and YBX1/Y-box protein 1. Interacts with MYOCD and SRF. In terms of tissue distribution, expressed in myocardium of heart failure patients.

Its subcellular location is the nucleus. In terms of biological role, transcriptional regulator which can act as an activator or a repressor. Represses the transcription of ACTA2 in fibroblasts and smooth muscle cells via its ability to interact with the purine-rich strand of a MCAT- containing element in the 5' flanking region of the gene. Represses the transcription of MYOCD, capable of repressing all isoforms of MYOCD but the magnitude of the repressive effects is most notable for the SMC- specific isoforms. Promotes hepatic glucose production by activating the transcription of ADCY6, leading to cAMP accumulation, increased PKA activity, CREB activation, and increased transcription of PCK1 and G6PC genes. Has capacity to bind repeated elements in single-stranded DNA such as the purine-rich single strand of the PUR element located upstream of the MYC gene. Participates in transcriptional and translational regulation of alpha-MHC expression in cardiac myocytes by binding to the purine-rich negative regulatory (PNR) element Modulates constitutive liver galectin-3 gene transcription by binding to its promoter. May play a role in the dendritic transport of a subset of mRNAs. This is Transcriptional regulator protein Pur-beta (PURB) from Homo sapiens (Human).